We begin with the raw amino-acid sequence, 204 residues long: Allatotropin (204 aa).

An N-terminal signal peptide occupies residues 1 to 20; the sequence is MNLTMQLAVIVAVCLCLAEG. The propeptide occupies 21–35; sequence APDVRLTRTKQQRPT. The segment at 47–83 is disordered; it reads RGFGKRDRPHPRAERDVDHQAPSARPNRGTPTFKSPT. At Phe49 the chain carries Phenylalanine amide. The span at 50–65 shows a compositional bias: basic and acidic residues; it reads GKRDRPHPRAERDVDH. Residues 53-204 constitute a propeptide that is removed on maturation; that stretch reads DRPHPRAERD…LSSEELLRNF (152 aa).

In terms of tissue distribution, expressed extensively in the brain, frontal ganglion and terminal ganglion of the day 2 fifth instar larva (at protein level). Not expressed in the larval brain after day 4 of the fifth instar, or in the brain of the pupa or adult. Expression in the terminal ganglion is localized to cells in the posterior portion of the seventh neuromere of day 2 fifth instar larvae. In the pupa and adult expression is detected in the medial region of neuromere 6, the dorsal medial region of neuromere 7, and the posterior neuromere of the terminal ganglion (at protein level). In the frontal ganglion expression decreases in the wandering larvae and is present at low levels in during pupal ecdysis, but is not detected in the adult. Expressed in the subesophageal ganglion of day 2 fifth instar larva, but not at any time before or after day 2. Not expressed in the abdominal ganglia 1-6 of the day 2 fifth instar larva (at protein level). Expressed in the anterior neuromeres of the pterothoracic ganglion in pupa but not in adult (at protein level). Expressed in the unfused abdominal ganglia of day 10 pupae, and in pharate adult is expressed in median neurosecretory cells M1, M2 and M5, but not in median neurosecretory cells M3 and M4 (at protein level). Not expressed in the differentiated median neurosecretory cells M5 of the larva (at protein level). In the pharate adult brain isoform 3 is the predominant form, with lower levels of isoform 2 and very low levels of isoform 1 detected. In the pharate adult nerve cord isoform 3 is the predominant form, with lower levels of isoform 2 and no isoform 1 detected. In the pharate adult frontal ganglion isoform 3 is expressed, but not isoform 1 and isoform 2.

It is found in the secreted. Neuropeptide stimulator of juvenile hormone synthesis. Cardioregulatory neurohormone that increases heart beat rate in the adult but not in the larva. Inhibits active ion transport in the midgut of feeding fourth instar and day 2 fifth instar larva, but not in the midgut of pharate or wandering fifth instar larva. The polypeptide is Allatotropin (Manduca sexta (Tobacco hawkmoth)).